We begin with the raw amino-acid sequence, 346 residues long: N-acetyl-gamma-glutamyl-phosphate reductase (346 aa).

Cys-150 is a catalytic residue.

This sequence belongs to the NAGSA dehydrogenase family. Type 1 subfamily.

The protein localises to the cytoplasm. It catalyses the reaction N-acetyl-L-glutamate 5-semialdehyde + phosphate + NADP(+) = N-acetyl-L-glutamyl 5-phosphate + NADPH + H(+). The protein operates within amino-acid biosynthesis; L-arginine biosynthesis; N(2)-acetyl-L-ornithine from L-glutamate: step 3/4. Functionally, catalyzes the NADPH-dependent reduction of N-acetyl-5-glutamyl phosphate to yield N-acetyl-L-glutamate 5-semialdehyde. In Brevibacillus brevis (strain 47 / JCM 6285 / NBRC 100599), this protein is N-acetyl-gamma-glutamyl-phosphate reductase.